The sequence spans 80 residues: Putative membrane protein insertion efficiency factor (80 aa).

This sequence belongs to the UPF0161 family.

Its subcellular location is the cell inner membrane. In terms of biological role, could be involved in insertion of integral membrane proteins into the membrane. This is Putative membrane protein insertion efficiency factor from Paracoccus denitrificans (strain Pd 1222).